The chain runs to 304 residues: Oxygen-dependent coproporphyrinogen-III oxidase (304 aa).

Ser-94 is a substrate binding site. His-98 and His-108 together coordinate a divalent metal cation. His-108 (proton donor) is an active-site residue. A substrate-binding site is contributed by 110–112; that stretch reads NVR. A divalent metal cation-binding residues include His-147 and His-177. Residues 242–277 form an important for dimerization region; the sequence is YVEFNLVYDRGTLFGLQSGGRTESILMSLPPVAHWR. 260–262 is a substrate binding site; that stretch reads GGR.

It belongs to the aerobic coproporphyrinogen-III oxidase family. Homodimer. The cofactor is a divalent metal cation.

It is found in the cytoplasm. The enzyme catalyses coproporphyrinogen III + O2 + 2 H(+) = protoporphyrinogen IX + 2 CO2 + 2 H2O. The protein operates within porphyrin-containing compound metabolism; protoporphyrin-IX biosynthesis; protoporphyrinogen-IX from coproporphyrinogen-III (O2 route): step 1/1. In terms of biological role, involved in the heme biosynthesis. Catalyzes the aerobic oxidative decarboxylation of propionate groups of rings A and B of coproporphyrinogen-III to yield the vinyl groups in protoporphyrinogen-IX. This chain is Oxygen-dependent coproporphyrinogen-III oxidase, found in Methylococcus capsulatus (strain ATCC 33009 / NCIMB 11132 / Bath).